A 146-amino-acid chain; its full sequence is Large ribosomal subunit protein uL14 (146 aa).

Belongs to the universal ribosomal protein uL14 family.

The sequence is that of Large ribosomal subunit protein uL14 (RPL23) from Encephalitozoon cuniculi (strain GB-M1) (Microsporidian parasite).